Consider the following 430-residue polypeptide: GTPase Obg (430 aa).

In terms of domain architecture, Obg spans Met1–Leu158. The tract at residues Arg118–Pro145 is disordered. Positions Ala159–Glu329 constitute an OBG-type G domain. GTP-binding positions include Gly165–Ser172, Phe190–Lys194, Asp212–Gly215, Asn282–Asp285, and Ser310–Ile312. Residues Ser172 and Thr192 each coordinate Mg(2+). Positions Lys352–Glu430 constitute an OCT domain.

Belongs to the TRAFAC class OBG-HflX-like GTPase superfamily. OBG GTPase family. As to quaternary structure, monomer. Requires Mg(2+) as cofactor.

It localises to the cytoplasm. An essential GTPase which binds GTP, GDP and possibly (p)ppGpp with moderate affinity, with high nucleotide exchange rates and a fairly low GTP hydrolysis rate. Plays a role in control of the cell cycle, stress response, ribosome biogenesis and in those bacteria that undergo differentiation, in morphogenesis control. The sequence is that of GTPase Obg from Staphylococcus epidermidis (strain ATCC 35984 / DSM 28319 / BCRC 17069 / CCUG 31568 / BM 3577 / RP62A).